The primary structure comprises 273 residues: ATP synthase subunit a (273 aa).

5 helical membrane passes run 44 to 64 (WHID…WLFY), 104 to 124 (IAPL…MDLI), 149 to 169 (DLNV…FYSI), 223 to 243 (LIFI…SVPW), and 244 to 264 (AIFH…LTIV).

This sequence belongs to the ATPase A chain family. F-type ATPases have 2 components, CF(1) - the catalytic core - and CF(0) - the membrane proton channel. CF(1) has five subunits: alpha(3), beta(3), gamma(1), delta(1), epsilon(1). CF(0) has three main subunits: a(1), b(2) and c(9-12). The alpha and beta chains form an alternating ring which encloses part of the gamma chain. CF(1) is attached to CF(0) by a central stalk formed by the gamma and epsilon chains, while a peripheral stalk is formed by the delta and b chains.

Its subcellular location is the cell inner membrane. Key component of the proton channel; it plays a direct role in the translocation of protons across the membrane. This is ATP synthase subunit a from Shewanella putrefaciens (strain CN-32 / ATCC BAA-453).